The sequence spans 254 residues: Probable glutathione transferase omega-2 (254 aa).

Residues Gly25 to Arg105 enclose the GST N-terminal domain. Catalysis depends on Cys35, which acts as the Nucleophile. Glutathione is bound by residues Lys62, Val75, and Glu89 to Ser90. The GST C-terminal domain occupies Asp110–Phe239.

This sequence belongs to the GST superfamily. Omega family.

It carries out the reaction RX + glutathione = an S-substituted glutathione + a halide anion + H(+). It catalyses the reaction L-dehydroascorbate + 2 glutathione = glutathione disulfide + L-ascorbate. The catalysed reaction is methylarsonate + 2 glutathione + H(+) = methylarsonous acid + glutathione disulfide + H2O. Exhibits glutathione-dependent thiol transferase activity. Has dehydroascorbate reductase activity and may contribute to the recycling of ascorbic acid. Participates in the biotransformation of inorganic arsenic and reduces monomethylarsonic acid (MMA). The protein is Probable glutathione transferase omega-2 (gsto-2) of Caenorhabditis elegans.